The primary structure comprises 317 residues: Beta-ketoacyl-[acyl-carrier-protein] synthase III (317 aa).

Residues Cys-112 and His-244 contribute to the active site. Residues 245 to 249 (QANLR) are ACP-binding. Residue Asn-274 is part of the active site.

It belongs to the thiolase-like superfamily. FabH family. As to quaternary structure, homodimer.

It localises to the cytoplasm. The catalysed reaction is malonyl-[ACP] + acetyl-CoA + H(+) = 3-oxobutanoyl-[ACP] + CO2 + CoA. The protein operates within lipid metabolism; fatty acid biosynthesis. In terms of biological role, catalyzes the condensation reaction of fatty acid synthesis by the addition to an acyl acceptor of two carbons from malonyl-ACP. Catalyzes the first condensation reaction which initiates fatty acid synthesis and may therefore play a role in governing the total rate of fatty acid production. Possesses both acetoacetyl-ACP synthase and acetyl transacylase activities. Its substrate specificity determines the biosynthesis of branched-chain and/or straight-chain of fatty acids. This chain is Beta-ketoacyl-[acyl-carrier-protein] synthase III, found in Shigella boydii serotype 4 (strain Sb227).